The primary structure comprises 121 residues: Fluoride-specific ion channel FluC (121 aa).

4 helical membrane passes run 5–25 (LLIF…TISI), 33–53 (FPWG…VFYT), 66–83 (LMLT…STFS), and 98–118 (FFTY…LGIW). Residues G74 and T77 each coordinate Na(+).

The protein belongs to the fluoride channel Fluc/FEX (TC 1.A.43) family.

Its subcellular location is the cell inner membrane. It catalyses the reaction fluoride(in) = fluoride(out). Na(+) is not transported, but it plays an essential structural role and its presence is essential for fluoride channel function. Its function is as follows. Fluoride-specific ion channel. Important for reducing fluoride concentration in the cell, thus reducing its toxicity. This Phocaeicola vulgatus (strain ATCC 8482 / DSM 1447 / JCM 5826 / CCUG 4940 / NBRC 14291 / NCTC 11154) (Bacteroides vulgatus) protein is Fluoride-specific ion channel FluC.